Here is a 142-residue protein sequence, read N- to C-terminus: MAAFIAKQMVGNQLSAVKGAVGGDGGDDGDDKEKAEEEERERQEAIKEAEDRRKEKHRKMEEEREKMRQDIRDKYNIKKKEEIVEAAPQEEPNPLMRKKKTPEELAAEAEQEELDDFTKLKNQIETQVNELKTQIEGKCVMQ.

2 disordered regions span residues 13–70 (QLSA…MRQD) and 83–105 (IVEA…PEEL). Residues 29–138 (GDDKEKAEEE…NELKTQIEGK (110 aa)) are a coiled coil. Positions 31–70 (DKEKAEEEERERQEAIKEAEDRRKEKHRKMEEEREKMRQD) are enriched in basic and acidic residues. Cys-139 is subject to Cysteine methyl ester. Cys-139 carries the S-farnesyl cysteine lipid modification. Positions 140–142 (VMQ) are cleaved as a propeptide — removed in mature form.

The protein belongs to the complexin/synaphin family. As to quaternary structure, binds to the SNARE core complex containing Snap25, synaptobrevin and Syx1A.

The protein resides in the membrane. Positively regulates a late step in synaptic vesicle exocytosis. This Drosophila melanogaster (Fruit fly) protein is Complexin (cpx).